A 172-amino-acid chain; its full sequence is Bacilliredoxin SRU_0242 (172 aa).

Residues 141 to 172 (TDEAPPSDAPSRPDLSSSPNAGGLPSTFQSIS) are disordered. Residues 154-172 (DLSSSPNAGGLPSTFQSIS) are compositionally biased toward polar residues.

Belongs to the bacilliredoxin family.

The protein is Bacilliredoxin SRU_0242 of Salinibacter ruber (strain DSM 13855 / M31).